We begin with the raw amino-acid sequence, 122 residues long: Small ribosomal subunit protein uS13 (122 aa).

The segment at 95 to 122 (SLPVRGQRTHTNARTRKGPAKSIAGKKK) is disordered.

It belongs to the universal ribosomal protein uS13 family. In terms of assembly, part of the 30S ribosomal subunit. Forms a loose heterodimer with protein S19. Forms two bridges to the 50S subunit in the 70S ribosome.

Functionally, located at the top of the head of the 30S subunit, it contacts several helices of the 16S rRNA. In the 70S ribosome it contacts the 23S rRNA (bridge B1a) and protein L5 of the 50S subunit (bridge B1b), connecting the 2 subunits; these bridges are implicated in subunit movement. Contacts the tRNAs in the A and P-sites. This Mesorhizobium japonicum (strain LMG 29417 / CECT 9101 / MAFF 303099) (Mesorhizobium loti (strain MAFF 303099)) protein is Small ribosomal subunit protein uS13.